We begin with the raw amino-acid sequence, 232 residues long: Cell surface superoxide dismutase [Cu-Zn] 4 (232 aa).

The signal sequence occupies residues 1 to 15 (MKYLSIISIVALALA). Asn-53 carries N-linked (GlcNAc...) asparagine glycosylation. Cu cation contacts are provided by His-75 and His-77. Asn-86 carries an N-linked (GlcNAc...) asparagine glycan. Residue His-93 participates in Cu cation binding. His-93 is a Zn(2+) binding site. An N-linked (GlcNAc...) asparagine glycan is attached at Asn-98. Zn(2+) is bound at residue Asp-113. The N-linked (GlcNAc...) asparagine glycan is linked to Asn-120. His-153 is a Cu cation binding site. N-linked (GlcNAc...) asparagine glycans are attached at residues Asn-156, Asn-164, Asn-182, Asn-193, and Asn-196. The segment covering 174-208 (TASAATWSNSSSSSSSSSKNSTNGSSGSSTSASQG) has biased composition (low complexity). The disordered stretch occupies residues 174–211 (TASAATWSNSSSSSSSSSKNSTNGSSGSSTSASQGSGA). Residue Ser-209 is the site of GPI-anchor amidated serine attachment. Positions 210–232 (GAGRAEISGFLAAGIAGVVAALI) are cleaved as a propeptide — removed in mature form. Arg-213 contributes to the substrate binding site.

The protein belongs to the Cu-Zn superoxide dismutase family. The cofactor is Cu cation. Requires Zn(2+) as cofactor. The GPI-anchor is attached to the protein in the endoplasmic reticulum and serves to target the protein to the cell surface. There, the glucosamine-inositol phospholipid moiety is cleaved off and the GPI-modified mannoprotein is covalently attached via its lipidless GPI glycan remnant to the 1,6-beta-glucan of the outer cell wall layer.

The protein resides in the secreted. The protein localises to the cell wall. Its subcellular location is the membrane. It catalyses the reaction 2 superoxide + 2 H(+) = H2O2 + O2. Functionally, superoxide dismutases serve to convert damaging superoxide radicals, a key form of ROS, to less damaging hydrogen peroxide that can be converted into water by catalase action. Degrades host-derived reactive oxygen species to escape innate immune surveillance. Involved in the occurrence of miconazole-tolerant persisters in biofilms. Persisters are cells that survive high doses of an antimicrobial agent. This chain is Cell surface superoxide dismutase [Cu-Zn] 4 (SOD4), found in Candida albicans (strain SC5314 / ATCC MYA-2876) (Yeast).